The primary structure comprises 358 residues: Mannonate dehydratase (358 aa).

The protein belongs to the mannonate dehydratase family. The cofactor is Fe(2+). Mn(2+) is required as a cofactor.

The catalysed reaction is D-mannonate = 2-dehydro-3-deoxy-D-gluconate + H2O. It participates in carbohydrate metabolism; pentose and glucuronate interconversion. In terms of biological role, catalyzes the dehydration of D-mannonate. This is Mannonate dehydratase from Lachnoclostridium phytofermentans (strain ATCC 700394 / DSM 18823 / ISDg) (Clostridium phytofermentans).